The following is an 828-amino-acid chain: MKLSRRDFMKANAAVAAAAAAGLTIPTVVQAAAGSADSIKWDKAPCRFCGTGCGVLVGTQNGRIVASQGDPEAAVNRGLSCIKGYFLPKIMYGKDRLNQPLLRMKDGQYHKEGEFTPVSWQQAFDIMAEKFKQALKEKGPEAVGMFGSGQWTVWEGYAAAKLLKAGLRSNNLDPNARHCMASAVVGFMRTFGMDEPMGCYDDIEQADAFVLWGSNMAEMHPILWSRITDRRLSNEKVNVSVLSTFEHRSFELADNGMVFTPQTDLAIMNYIANYIIQNNAVDQDFLNRHVNFRRGATDIGYGLRPTDPLEKAAKNPGSDASDPMSFEEYKAFVADYTLEKTAKMSGVPEDQLEALAKLYADPNIKVVSYWTMGFNQHTRGVWANNLCYNLHLLTGKISKPGCGPFSLTGQPSACGTAREVGTFAHRLPADMVVTNEKHRQTAEQKWQLPAGTIPAKVGLHAVAQDRALKDGTLNAYWVMCNNNMQAGPNINEDRMPGWRDARNFVVVSDPYPTVSALAADLILPTAMWVEKEGAYGNAERRTQFWRQQVKAPGEAKSDLWQLVEFSKRFTVEEVWPAELLAQKPEYRGKTLYDVLFANGEVNKYPLTEIPADQLNDEARDFGFYLQKGLFEEYAGFGRGHGHDLAPFDSYHQARGLRWPVVEGKETLWRYREGTDPYVKAGEEVRFYGKPDGKAVIFALPFEPAAESPDKEYDLWLSTGRVLEHWHTGSMTRRVPELHRAFPQAVVFIHPLDAKSRNLRRGEKVRVLSRRGELISTVETRGRNRPPRGLVYMPFFDAAQLVNNLTLDATDPLSKEVDFKKCAVKLEKV.

A signal peptide (tat-type signal) is located at residues Met-1–Ala-33. Positions Ile-39–Asp-95 constitute a 4Fe-4S Mo/W bis-MGD-type domain. Positions 46, 49, 53, and 81 each coordinate [4Fe-4S] cluster. Mo-bis(molybdopterin guanine dinucleotide) is bound by residues Lys-83, Gln-150, Asn-175, Cys-179, Trp-212–Met-219, Ser-243–His-247, Gln-262–Asp-264, Met-372, Gln-376, Asn-482, Ser-508–Asp-509, Lys-531, Asp-558, and Thr-718–Thr-727. Position 794 (Phe-794) interacts with substrate. Mo-bis(molybdopterin guanine dinucleotide)-binding residues include Asn-802 and Lys-819.

It belongs to the prokaryotic molybdopterin-containing oxidoreductase family. NasA/NapA/NarB subfamily. Component of the periplasmic nitrate reductase NapAB complex composed of NapA and NapB. [4Fe-4S] cluster serves as cofactor. Requires Mo-bis(molybdopterin guanine dinucleotide) as cofactor. Predicted to be exported by the Tat system. The position of the signal peptide cleavage has not been experimentally proven.

Its subcellular location is the periplasm. It carries out the reaction 2 Fe(II)-[cytochrome] + nitrate + 2 H(+) = 2 Fe(III)-[cytochrome] + nitrite + H2O. In terms of biological role, catalytic subunit of the periplasmic nitrate reductase complex NapAB. Receives electrons from NapB and catalyzes the reduction of nitrate to nitrite. The protein is Periplasmic nitrate reductase of Serratia proteamaculans (strain 568).